We begin with the raw amino-acid sequence, 405 residues long: S-adenosylmethionine synthase (405 aa).

141–146 (GQGSVD) lines the ATP pocket.

This sequence belongs to the AdoMet synthase 2 family. The cofactor is Mg(2+).

It catalyses the reaction L-methionine + ATP + H2O = S-adenosyl-L-methionine + phosphate + diphosphate. It participates in amino-acid biosynthesis; S-adenosyl-L-methionine biosynthesis; S-adenosyl-L-methionine from L-methionine: step 1/1. In terms of biological role, catalyzes the formation of S-adenosylmethionine from methionine and ATP. The polypeptide is S-adenosylmethionine synthase (Methanococcus maripaludis (Methanococcus deltae)).